The chain runs to 262 residues: Ribosomal RNA small subunit methyltransferase A (262 aa).

Positions 16, 18, 43, 64, 89, and 109 each coordinate S-adenosyl-L-methionine.

This sequence belongs to the class I-like SAM-binding methyltransferase superfamily. rRNA adenine N(6)-methyltransferase family. RsmA subfamily.

It is found in the cytoplasm. It carries out the reaction adenosine(1518)/adenosine(1519) in 16S rRNA + 4 S-adenosyl-L-methionine = N(6)-dimethyladenosine(1518)/N(6)-dimethyladenosine(1519) in 16S rRNA + 4 S-adenosyl-L-homocysteine + 4 H(+). Its function is as follows. Specifically dimethylates two adjacent adenosines (A1518 and A1519) in the loop of a conserved hairpin near the 3'-end of 16S rRNA in the 30S particle. May play a critical role in biogenesis of 30S subunits. The polypeptide is Ribosomal RNA small subunit methyltransferase A (Xanthomonas campestris pv. campestris (strain 8004)).